We begin with the raw amino-acid sequence, 171 residues long: S-ribosylhomocysteine lyase (171 aa).

The Fe cation site is built by His54, His58, and Cys128.

It belongs to the LuxS family. As to quaternary structure, homodimer. Requires Fe cation as cofactor.

It catalyses the reaction S-(5-deoxy-D-ribos-5-yl)-L-homocysteine = (S)-4,5-dihydroxypentane-2,3-dione + L-homocysteine. Involved in the synthesis of autoinducer 2 (AI-2) which is secreted by bacteria and is used to communicate both the cell density and the metabolic potential of the environment. The regulation of gene expression in response to changes in cell density is called quorum sensing. Catalyzes the transformation of S-ribosylhomocysteine (RHC) to homocysteine (HC) and 4,5-dihydroxy-2,3-pentadione (DPD). This chain is S-ribosylhomocysteine lyase, found in Pectobacterium atrosepticum (strain SCRI 1043 / ATCC BAA-672) (Erwinia carotovora subsp. atroseptica).